We begin with the raw amino-acid sequence, 271 residues long: uncharacterized protein (271 aa).

Residues 1–22 (MIHSKRLKLCLCLIILSVFIGA) form the signal peptide. Cys23 carries N-palmitoyl cysteine lipidation. Cys23 is lipidated: S-diacylglycerol cysteine.

It belongs to the staphylococcal tandem lipoprotein family.

The protein resides in the cell membrane. This is an uncharacterized protein from Staphylococcus aureus (strain MW2).